The sequence spans 157 residues: 6,7-dimethyl-8-ribityllumazine synthase (157 aa).

5-amino-6-(D-ribitylamino)uracil contacts are provided by residues F22, 57 to 59 (AYE), and 81 to 83 (TVI). 86-87 (GT) contacts (2S)-2-hydroxy-3-oxobutyl phosphate. The active-site Proton donor is H89. 5-amino-6-(D-ribitylamino)uracil is bound at residue F114. Residue R128 coordinates (2S)-2-hydroxy-3-oxobutyl phosphate.

This sequence belongs to the DMRL synthase family. Forms an icosahedral capsid composed of 60 subunits, arranged as a dodecamer of pentamers.

It catalyses the reaction (2S)-2-hydroxy-3-oxobutyl phosphate + 5-amino-6-(D-ribitylamino)uracil = 6,7-dimethyl-8-(1-D-ribityl)lumazine + phosphate + 2 H2O + H(+). Its pathway is cofactor biosynthesis; riboflavin biosynthesis; riboflavin from 2-hydroxy-3-oxobutyl phosphate and 5-amino-6-(D-ribitylamino)uracil: step 1/2. Its function is as follows. Catalyzes the formation of 6,7-dimethyl-8-ribityllumazine by condensation of 5-amino-6-(D-ribitylamino)uracil with 3,4-dihydroxy-2-butanone 4-phosphate. This is the penultimate step in the biosynthesis of riboflavin. This Pasteurella multocida (strain Pm70) protein is 6,7-dimethyl-8-ribityllumazine synthase.